Consider the following 334-residue polypeptide: Ketol-acid reductoisomerase (NADP(+)) (334 aa).

A KARI N-terminal Rossmann domain is found at 1–181 (MTTVYYDQSV…GATRAGVLET (181 aa)). NADP(+)-binding positions include 25 to 28 (YGSQ), Arg48, Ser52, and 82 to 85 (DEIQ). The active site involves His107. Gly133 lines the NADP(+) pocket. A KARI C-terminal knotted domain is found at 182-327 (SFKEETETDL…RELRDMMPFI (146 aa)). Mg(2+) is bound by residues Asp190, Glu194, Glu226, and Glu230. Ser251 serves as a coordination point for substrate.

Belongs to the ketol-acid reductoisomerase family. Mg(2+) serves as cofactor.

It catalyses the reaction (2R)-2,3-dihydroxy-3-methylbutanoate + NADP(+) = (2S)-2-acetolactate + NADPH + H(+). It carries out the reaction (2R,3R)-2,3-dihydroxy-3-methylpentanoate + NADP(+) = (S)-2-ethyl-2-hydroxy-3-oxobutanoate + NADPH + H(+). Its pathway is amino-acid biosynthesis; L-isoleucine biosynthesis; L-isoleucine from 2-oxobutanoate: step 2/4. It participates in amino-acid biosynthesis; L-valine biosynthesis; L-valine from pyruvate: step 2/4. Functionally, involved in the biosynthesis of branched-chain amino acids (BCAA). Catalyzes an alkyl-migration followed by a ketol-acid reduction of (S)-2-acetolactate (S2AL) to yield (R)-2,3-dihydroxy-isovalerate. In the isomerase reaction, S2AL is rearranged via a Mg-dependent methyl migration to produce 3-hydroxy-3-methyl-2-ketobutyrate (HMKB). In the reductase reaction, this 2-ketoacid undergoes a metal-dependent reduction by NADPH to yield (R)-2,3-dihydroxy-isovalerate. The polypeptide is Ketol-acid reductoisomerase (NADP(+)) (Staphylococcus saprophyticus subsp. saprophyticus (strain ATCC 15305 / DSM 20229 / NCIMB 8711 / NCTC 7292 / S-41)).